A 486-amino-acid polypeptide reads, in one-letter code: Recombining binding protein suppressor of hairless (486 aa).

DNA-binding regions lie at residues 43-53 (QKSYGNEKRFF) and 151-156 (SKPSKK). Lysine 161 carries the post-translational modification N6-acetyllysine. The interval 178–183 (RLRSQT) is DNA-binding. Residues 341–431 (PVVESLQLNG…YSTSLTFTYT (91 aa)) enclose the IPT/TIG domain. The span at 451-467 (SSQVPPNESNTNSEGSY) shows a compositional bias: polar residues. Residues 451-486 (SSQVPPNESNTNSEGSYTNASTNSTSVTSSTATVVS) form a disordered region. Residues 468–486 (TNASTNSTSVTSSTATVVS) are compositionally biased toward low complexity.

It belongs to the Su(H) family. Interacts with activated NOTCH1, NOTCH2 or NOTCH3. Interacts with MINT/SHARP. This interaction may mediate the recruitment of large corepressor complexes containing proteins such as HDAC1, HDAC2, NCOR2, SAP30, FHL1/KYOT2 and CIR1. Interacts with EP300, MAML1 and PTF1A. Interacts with RITA1, leading to nuclear export, prevent the interaction between RBPJ and NICD product and subsequent down-regulation of the Notch signaling pathway. Interacts with SNW1. Interacts with CHCHD2 and CXXC5. Interacts with BEND6 (via BEN domain). Interacts with NKAPL. Interacts with ZMIZ1. Interacts with RBM15. Interacts with L3MBTL3 and KDM1A; the interaction with KDM1A is weaker in the absence of L3MBTL3 and the interaction with L3MBTL3 is impaired by Notch-derived peptides containing the intracellular domain (NICD).

The protein resides in the nucleus. Its subcellular location is the cytoplasm. Functionally, transcriptional regulator that plays a central role in Notch signaling, a signaling pathway involved in cell-cell communication that regulates a broad spectrum of cell-fate determinations. Acts as a transcriptional repressor when it is not associated with Notch proteins. When associated with some NICD product of Notch proteins (Notch intracellular domain), it acts as a transcriptional activator that activates transcription of Notch target genes. Probably represses or activates transcription via the recruitment of chromatin remodeling complexes containing histone deacetylase or histone acetylase proteins, respectively. Specifically binds to the immunoglobulin kappa-type J segment recombination signal sequence. Binds specifically to methylated DNA. Binds to the oxygen responsive element of COX4I2 and activates its transcription under hypoxia conditions (4% oxygen). Negatively regulates the phagocyte oxidative burst in response to bacterial infection by repressing transcription of NADPH oxidase subunits. The sequence is that of Recombining binding protein suppressor of hairless (RBPJ) from Pongo abelii (Sumatran orangutan).